A 299-amino-acid polypeptide reads, in one-letter code: Riboflavin transporter ImpX (299 aa).

2 consecutive EamA domains span residues 6–144 (KGAL…YLLT) and 162–294 (SLYS…SIIK). 10 helical membrane-spanning segments follow: residues 7–27 (GALL…ALTP), 34–54 (VPFV…ILFG), 68–88 (DLFF…LCIV), 101–121 (VVTL…RLLL), 129–149 (YLFW…EFHL), 158–178 (LLPA…ATVF), 202–222 (IMFV…ATAG), 224–244 (WLIF…LYYF), 253–273 (VATM…YLIN), and 276–296 (VLSP…IKIS).

Belongs to the EamA transporter family.

The protein resides in the cell membrane. In terms of biological role, transports riboflavin into the cell. The chain is Riboflavin transporter ImpX from Fusobacterium nucleatum subsp. nucleatum (strain ATCC 23726 / VPI 4351).